The primary structure comprises 362 residues: Phosphoserine aminotransferase (362 aa).

Arginine 42 provides a ligand contact to L-glutamate. Pyridoxal 5'-phosphate-binding positions include 76 to 77, tryptophan 102, threonine 153, aspartate 174, and glutamine 197; that span reads AR. Lysine 198 is modified (N6-(pyridoxal phosphate)lysine). 239 to 240 is a binding site for pyridoxal 5'-phosphate; it reads NT.

Belongs to the class-V pyridoxal-phosphate-dependent aminotransferase family. SerC subfamily. As to quaternary structure, homodimer. The cofactor is pyridoxal 5'-phosphate.

Its subcellular location is the cytoplasm. It catalyses the reaction O-phospho-L-serine + 2-oxoglutarate = 3-phosphooxypyruvate + L-glutamate. The enzyme catalyses 4-(phosphooxy)-L-threonine + 2-oxoglutarate = (R)-3-hydroxy-2-oxo-4-phosphooxybutanoate + L-glutamate. It functions in the pathway amino-acid biosynthesis; L-serine biosynthesis; L-serine from 3-phospho-D-glycerate: step 2/3. It participates in cofactor biosynthesis; pyridoxine 5'-phosphate biosynthesis; pyridoxine 5'-phosphate from D-erythrose 4-phosphate: step 3/5. Its function is as follows. Catalyzes the reversible conversion of 3-phosphohydroxypyruvate to phosphoserine and of 3-hydroxy-2-oxo-4-phosphonooxybutanoate to phosphohydroxythreonine. This Xenorhabdus nematophila (strain ATCC 19061 / DSM 3370 / CCUG 14189 / LMG 1036 / NCIMB 9965 / AN6) protein is Phosphoserine aminotransferase.